The sequence spans 150 residues: uncharacterized protein (150 aa).

This is an uncharacterized protein from Mycoplasma pneumoniae (strain ATCC 29342 / M129 / Subtype 1) (Mycoplasmoides pneumoniae).